Consider the following 2559-residue polypeptide: Nonribosomal peptide synthetase asqK (2559 aa).

Positions 90–474 (YRPSHTAIHA…SRKDSQVKIR (385 aa)) are adenylation 1. A Carrier 1 domain is found at 593–669 (TNIEQLVHEL…SLVHYPAGLE (77 aa)). An O-(pantetheine 4'-phosphoryl)serine modification is found at Ser-627. A condensation 1 region spans residues 695–989 (TVEQSFSQAR…GNVQCIRTKV (295 aa)). The interval 1155 to 1562 (FDEQVRAQTD…GRMDQQVKVR (408 aa)) is adenylation 2. A methyltransferase region spans residues 1681-1776 (LEIGTGSGMI…NTIKDLVRQG (96 aa)). The Carrier 2 domain occupies 2090–2164 (AFTSEIERAV…GLAQHLQGLG (75 aa)). Ser-2124 is modified (O-(pantetheine 4'-phosphoryl)serine). The condensation 2 stretch occupies residues 2261 to 2409 (FDGVSLSAIL…VNRCLLRVKV (149 aa)).

This sequence belongs to the NRP synthetase family.

It carries out the reaction O-methyl-L-tyrosine + anthranilate + S-adenosyl-L-methionine + 2 ATP = (-)-4'-methoxycyclopeptine + 2 AMP + S-adenosyl-L-homocysteine + 2 diphosphate + 2 H(+). The enzyme catalyses anthranilate + L-phenylalanine + S-adenosyl-L-methionine + 2 ATP = cyclopeptine + 2 AMP + S-adenosyl-L-homocysteine + 2 diphosphate + 2 H(+). The protein operates within secondary metabolite biosynthesis. Its pathway is alkaloid biosynthesis. It participates in mycotoxin biosynthesis. Functionally, nonribosomal peptide synthetase; part of the gene cluster that mediates the biosynthesis of the aspoquinolone mycotoxins. The first stage is catalyzed by the nonribosomal peptide synthetase asqK that condenses anthranilic acid and O-methyl-L-tyrosine to produce 4'-methoxycyclopeptin. AsqK is also able to use anthranilic acid and L-phenylalanine as substrates to produce cyclopeptin, but at a tenfold lower rate. Within the pathway, 4'-methoxycyclopeptin is then converted to 4'-methoxydehydrocyclopeptin by the ketoglutarate-dependent dioxygenase asqJ. AsqJ also converts its first product 4'-methoxydehydrocyclopeptin to 4'-methoxycyclopenin. The following conversion of 4'-methoxycyclopenin into 4'-methoxyviridicatin is catalyzed by the cyclopenase asqI. 4'-methoxyviridicatin is the precursor of quinolone natural products, and is further converted to quinolinone B. The prenyltransferase asqH1 then catalyzes the canonical Friedel-Crafts alkylation of quinolinone B with dimethylallyl cation to yield dimethylallyl quinolone, which is subjected to FAD-dependent dehydrogenation by the FAD-linked oxidoreductase asqF to yield conjugated aryl diene. The delta(3') double bond then serves as the site of the second alkylation with DMAPP catalyzed by the prenyltransferase asqH2 to yield a carbenium ion intermediate, which can be attacked by H(2)O to yield a styrenyl quinolone containing a C3'-hydroxyprenyl chain. The FAD-dependent monooxygenase asqG performs epoxidation of the terminal C7'-C8' olefin. Finally, after dehydratation of the epoxide at C3 by asqC, the quinolone epoxide rearrangement protein asqO catalyzes an enzymatic 3-exo-tet cyclization to yield the cyclopropyl-THF ring system in aspoquinolone. The polypeptide is Nonribosomal peptide synthetase asqK (Emericella nidulans (strain FGSC A4 / ATCC 38163 / CBS 112.46 / NRRL 194 / M139) (Aspergillus nidulans)).